The primary structure comprises 686 residues: Band 4.1-like protein 4A (686 aa).

Residues 11-299 (FYCEVLLLDE…EHHTFFRMPE (289 aa)) enclose the FERM domain. Residue S304 is modified to Phosphoserine. The disordered stretch occupies residues 331-686 (RDLSIQLPRP…IQASRLKTET (356 aa)). Over residues 357-376 (AQTQPAESNSISRITANMEN) the composition is skewed to polar residues. Phosphoserine occurs at positions 389, 393, and 402. The segment covering 418–428 (GPQSGLYNSPS) has biased composition (polar residues). A compositionally biased stretch (low complexity) spans 479 to 489 (RCNTSSGSESE). Composition is skewed to basic and acidic residues over residues 518–527 (VLRRQKEKNQ) and 547–561 (QAKEELWKHIQKELV). Residues 588–601 (IRHSHSPRSYRQYR) are compositionally biased toward basic residues. Basic and acidic residues predominate over residues 648–658 (GSKDSLMEEKP). Over residues 673–686 (TIKTIQASRLKTET) the composition is skewed to polar residues.

Expressed in many tissues. High levels of expression in brain, liver, thymus and peripheral blood leukocytes and low levels of expression in heart, kidney, testis and colon.

It localises to the cytoplasm. The protein localises to the cytoskeleton. The protein is Band 4.1-like protein 4A of Homo sapiens (Human).